Consider the following 480-residue polypeptide: Glutamate--tRNA ligase (480 aa).

The short motif at 21 to 31 (PSPTGYLHVGG) is the 'HIGH' region element. Zn(2+) is bound by residues Cys-110, Cys-112, Cys-137, and His-139. The 'KMSKS' region motif lies at 248-252 (KLSKR). Residue Lys-251 coordinates ATP.

This sequence belongs to the class-I aminoacyl-tRNA synthetase family. Glutamate--tRNA ligase type 1 subfamily. In terms of assembly, monomer. Requires Zn(2+) as cofactor.

Its subcellular location is the cytoplasm. It carries out the reaction tRNA(Glu) + L-glutamate + ATP = L-glutamyl-tRNA(Glu) + AMP + diphosphate. Catalyzes the attachment of glutamate to tRNA(Glu) in a two-step reaction: glutamate is first activated by ATP to form Glu-AMP and then transferred to the acceptor end of tRNA(Glu). In Haemophilus influenzae (strain ATCC 51907 / DSM 11121 / KW20 / Rd), this protein is Glutamate--tRNA ligase.